A 134-amino-acid chain; its full sequence is MSWQAYVDDHLMCDIEGHEGHRLTAAAIVGHDGSVWAQSATFPQFKPEEMNGIMTDFNEPGHLAPTGLHLGGTKYMVIQGEAGAVIRGKKGSGGITIKKTGQALVFGIYEEPVTPGQCNMVVERLGDYLIEQGL.

C13 and C118 are oxidised to a cystine. An Involved in PIP2 interaction motif is present at residues A84–T100. T114 is subject to Phosphothreonine.

It belongs to the profilin family. Occurs in many kinds of cells as a complex with monomeric actin in a 1:1 ratio. Post-translationally, phosphorylated by MAP kinases.

The protein localises to the cytoplasm. Its subcellular location is the cytoskeleton. Its function is as follows. Binds to actin and affects the structure of the cytoskeleton. At high concentrations, profilin prevents the polymerization of actin, whereas it enhances it at low concentrations. This is Profilin-2 from Olea europaea (Common olive).